The sequence spans 164 residues: Class I hydrophobin rodA (164 aa).

The signal sequence occupies residues 1–18 (MRFSISALVLGLAATVYA). An N-linked (GlcNAc...) asparagine glycan is attached at Asn-50. Disulfide bonds link Cys-60–Cys-138, Cys-68–Cys-132, Cys-69–Cys-109, and Cys-139–Cys-157.

This sequence belongs to the fungal hydrophobin family. Self-assembles to form functional amyloid fibrils called rodlets. Self-assembly into fibrillar rodlets occurs spontaneously at hydrophobic:hydrophilic interfaces and the rodlets further associate laterally to form amphipathic monolayers.

It is found in the secreted. It localises to the cell wall. Aerial growth, conidiation, and dispersal of filamentous fungi in the environment rely upon a capability of their secreting small amphipathic proteins called hydrophobins (HPBs) with low sequence identity. Class I can self-assemble into an outermost layer of rodlet bundles on aerial cell surfaces, conferring cellular hydrophobicity that supports fungal growth, development and dispersal; whereas Class II form highly ordered films at water-air interfaces through intermolecular interactions but contribute nothing to the rodlet structure. RodA is a class I hydrophobin involved in the cell surface hydrophobicity and conidiation under aerial conditions. The surface rodlet layer of the conidial cell wall makes airborne conidia of filamentous fungi inert to both innate and adaptive immunity. This is Class I hydrophobin rodA from Penicillium camembertii.